Here is a 111-residue protein sequence, read N- to C-terminus: uncharacterized protein (111 aa).

Positions 1–26 are disordered; it reads MDLKDGVEEEEGAGENGKGGTHAQRV.

This is an uncharacterized protein from Caenorhabditis elegans.